An 889-amino-acid chain; its full sequence is MKLSILFLFAIAVQAAFLGIDYGQQSIKAMVVSPKAMMEIVLTPEAKRKDTSGICIRNVNGVLERHYGNSIGSLVTRFPQNTAMHLRSLLGKSMNDKDTIESYLRENPGANLTSTTRNTIAITIDGVEYPVEQLVAMNLQEIIDRANQHIKETDTTGIDFVEQVGIAIPEQFNQAQRQALLDALALTSVKDEAVLVSDGLSVAIDYALKRPDLEINVPQYYIVFDVGTSAAKATLFSLTQPEDLSSPIKIEIGAFDSEATVGGSKFIAAIADIVEDKFLEKNTKITRKSLVENPRARAKIIQAAEKAKLVLSANNEAIISIESLVDDIDFRTTIARSEFQDIFEDNKHTVVKAIKGAIGNQLWDDNISLEDISGVILSGGSSRVPMVQEEIAKLVGEEKILKNVNADETVINGATLKGLKYFGSFKTKPLDITERSLFDYSVEMSGESSSKTVFEKGTKFPNESSILYKAPKKFGKELKFDLFESDTRILSNIVDTTVSSKNWTSACKKGQLYLNVTFDLDSNRVFKIKDITVLCDSDGNAKEEEFEFIDVINDVTKATDVMPLSNAEIRQLSNAITSWNRKDRERKRVQESLNVLEAELYDCRSFIEEFEEKLGEEEFETLKSFTAFVKEKLEYLEDNSADMSKKDIEKLVRETRSQRDTLSRFYNSLDAALGSKDFQKLVDTASKSIKKYKEIESKNLADLENKAEKFNVIGLNVTEKYNSILSKMSFSSIRRSSEENIKTLAGLIDEVNESIKSKAIDDESLENLIKTKLAFEELINTLDLENRQWTYQHQLVMKELKKMYNKKMKAIKKQEKQNENEENGDDEGDDEDETKTKKYLKEATSSGDSSTIKEEDSTGSNEAGNKGDEEDEEEEEDDSSAGNVFDDEL.

An N-terminal signal peptide occupies residues methionine 1 to alanine 15. 7 N-linked (GlcNAc...) asparagine glycosylation sites follow: asparagine 111, asparagine 366, asparagine 462, asparagine 502, asparagine 515, asparagine 716, and asparagine 752. A disordered region spans residues isoleucine 811–leucine 889. 2 stretches are compositionally biased toward acidic residues: residues asparagine 820–glutamate 833 and aspartate 868–leucine 889. Residues aspartate 886 to leucine 889 carry the Prevents secretion from ER motif.

It belongs to the heat shock protein 70 family.

Its subcellular location is the endoplasmic reticulum lumen. The catalysed reaction is ATP + H2O = ADP + phosphate + H(+). In terms of biological role, chaperone required for protein translocation and folding in the endoplasmic reticulum. The protein is Heat shock protein 70 homolog LHS1 (LHS1) of Candida glabrata (strain ATCC 2001 / BCRC 20586 / JCM 3761 / NBRC 0622 / NRRL Y-65 / CBS 138) (Yeast).